Reading from the N-terminus, the 59-residue chain is Cecropin-B1 (59 aa).

Residues Met1 to Ala23 form the signal peptide. At Leu57 the chain carries Leucine amide.

This sequence belongs to the cecropin family.

It localises to the secreted. Functionally, cecropins have lytic and antibacterial activity against several Gram-positive and Gram-negative bacteria. The polypeptide is Cecropin-B1 (CECB1) (Culex pipiens pipiens (Northern house mosquito)).